The sequence spans 416 residues: Serine hydroxymethyltransferase (416 aa).

Residues Leu-118 and 122-124 each bind (6S)-5,6,7,8-tetrahydrofolate; that span reads GHL. Lys-226 carries the N6-(pyridoxal phosphate)lysine modification. (6S)-5,6,7,8-tetrahydrofolate-binding positions include Glu-242 and 350-352; that span reads SPF.

Belongs to the SHMT family. Homodimer. Pyridoxal 5'-phosphate is required as a cofactor.

It localises to the cytoplasm. The catalysed reaction is (6R)-5,10-methylene-5,6,7,8-tetrahydrofolate + glycine + H2O = (6S)-5,6,7,8-tetrahydrofolate + L-serine. The protein operates within one-carbon metabolism; tetrahydrofolate interconversion. It participates in amino-acid biosynthesis; glycine biosynthesis; glycine from L-serine: step 1/1. Its function is as follows. Catalyzes the reversible interconversion of serine and glycine with tetrahydrofolate (THF) serving as the one-carbon carrier. This reaction serves as the major source of one-carbon groups required for the biosynthesis of purines, thymidylate, methionine, and other important biomolecules. Also exhibits THF-independent aldolase activity toward beta-hydroxyamino acids, producing glycine and aldehydes, via a retro-aldol mechanism. This Helicobacter hepaticus (strain ATCC 51449 / 3B1) protein is Serine hydroxymethyltransferase.